The primary structure comprises 522 residues: Ribose import ATP-binding protein RbsA 1 (522 aa).

2 consecutive ABC transporter domains span residues 8–243 (LRIE…GRSI) and 249–496 (RERP…VSTN). 40-47 (GENGAGKS) contacts ATP. Positions 492–522 (AVSTNQYKPDKSDKPDASAGKTDQKEAPRGH) are disordered. Over residues 499 to 522 (KPDKSDKPDASAGKTDQKEAPRGH) the composition is skewed to basic and acidic residues.

It belongs to the ABC transporter superfamily. Ribose importer (TC 3.A.1.2.1) family. As to quaternary structure, the complex is composed of an ATP-binding protein (RbsA), two transmembrane proteins (RbsC) and a solute-binding protein (RbsB).

It localises to the cell membrane. It catalyses the reaction D-ribose(out) + ATP + H2O = D-ribose(in) + ADP + phosphate + H(+). Part of the ABC transporter complex RbsABC involved in ribose import. Responsible for energy coupling to the transport system. This Streptomyces avermitilis (strain ATCC 31267 / DSM 46492 / JCM 5070 / NBRC 14893 / NCIMB 12804 / NRRL 8165 / MA-4680) protein is Ribose import ATP-binding protein RbsA 1.